Here is a 629-residue protein sequence, read N- to C-terminus: Proteoglycan Cow (629 aa).

An N-terminal signal peptide occupies residues Met-1–Ala-27. 2 disordered regions span residues Lys-118–Glu-186 and Gly-198–Glu-223. Positions Asp-128 to Ser-143 are enriched in acidic residues. The N-linked (GlcNAc...) asparagine glycan is linked to Asn-142. The segment covering Ser-144–Ala-159 has biased composition (low complexity). The segment covering Glu-167–Glu-186 has biased composition (acidic residues). The Kazal-like domain occupies Asp-222 to Pro-273. 3 disulfides stabilise this stretch: Cys-228/Cys-258, Cys-231/Cys-251, and Cys-240/Cys-272. Asn-244 carries N-linked (GlcNAc...) asparagine glycosylation. The tract at residues Ser-298 to Asn-356 is disordered. The span at Gln-301–Asn-340 shows a compositional bias: low complexity. EF-hand domains are found at residues Ala-468–Arg-503 and Phe-508–Pro-535. Residues Asp-481, Asn-483, Asp-485, Gln-487, and Glu-492 each coordinate Ca(2+). The Thyroglobulin type-1 domain maps to Asp-533–Cys-594. 3 cysteine pairs are disulfide-bonded: Cys-536-Cys-555, Cys-566-Cys-573, and Cys-575-Cys-594. The tract at residues Ala-602–Phe-629 is disordered. A compositionally biased stretch (acidic residues) spans Ser-606–Ala-619. Low complexity predominate over residues Glu-620–Phe-629.

In terms of assembly, interacts (in heparan sulfate-bound form) with wg. Contains heparan sulfate O-linked oligosaccharides. In terms of tissue distribution, in the wing disk, detected throughout the disk where it is localized primarily to the apical surface but is also present at the basal surface (at protein level).

The protein localises to the secreted. In terms of biological role, binds to the Wnt signaling protein wg, stabilizes it and promotes its extracellular distribution. This is required for establishment of a wg gradient during development to allow for regulation of target genes at different levels. The protein is Proteoglycan Cow of Drosophila melanogaster (Fruit fly).